The primary structure comprises 142 residues: Large ribosomal subunit protein uL16 (142 aa).

This sequence belongs to the universal ribosomal protein uL16 family. Part of the 50S ribosomal subunit.

Binds 23S rRNA and is also seen to make contacts with the A and possibly P site tRNAs. In Gemmatimonas aurantiaca (strain DSM 14586 / JCM 11422 / NBRC 100505 / T-27), this protein is Large ribosomal subunit protein uL16.